The sequence spans 473 residues: Probable dipeptidase (473 aa).

The active site involves Cys-10.

It belongs to the peptidase C69 family.

It catalyses the reaction an L-aminoacyl-L-amino acid + H2O = 2 an L-alpha-amino acid. The polypeptide is Probable dipeptidase (Latilactobacillus sakei (Lactobacillus sakei)).